Reading from the N-terminus, the 464-residue chain is Serine protease PepD (464 aa).

The tract at residues 1–71 (MAKLARVVGL…TQYRQPYEAL (71 aa)) is disordered. The Cytoplasmic segment spans residues 1-100 (MAKLARVVGL…GMVRQRPRAG (100 aa)). Positions 39–48 (QGQQQTYSQQ) are enriched in low complexity. A helical membrane pass occupies residues 101–121 (MLAIGAVTIAVVSAGIGGAAA). Over 122-464 (SLVGFNRAPA…VQVTLGKAEQ (343 aa)) the chain is Periplasmic. Active-site charge relay system residues include H197, D236, and S317. Residues 368-449 (LISTGKASHA…TVALTFQDPS (82 aa)) enclose the PDZ domain.

It belongs to the peptidase S1C family. In terms of assembly, homotrimer. Interacts with numerous proteins, including the 35 kDa antigen PspA.

The protein localises to the cell inner membrane. It is found in the secreted. The protein resides in the cell wall. It catalyses the reaction Acts on substrates that are at least partially unfolded. The cleavage site P1 residue is normally between a pair of hydrophobic residues, such as Val-|-Val.. Its activity is regulated as follows. Probably regulates its own activity by autocleavage, which removes the PDZ domain. Inhibited by the serine protease inhibitor diisopropylfluorophosphate (DFP). Inhibited by fluoroquinolone such as ciprofloxacin, moxifloxacin and ofloxacin and their analogs. Required for virulence. Acts both as a protease, which degrades and/or refolds damaged substrate targets, and as a chaperone. Plays an important role in the stress response network mediated through the two-component regulatory system MprAB and SigE signaling networks. May utilize its PDZ domain to recognize and process misfolded proteins at the cell membrane, leading to activation of the MprAB and SigE signaling pathways and subsequent establishment of a positive feedback loop that facilitates bacterial adaptation. Interacts with and potentially cleaves several proteins, including the 35 kDa antigen PspA. Proteolytic cleavage of PspA may help to maintain cell envelope homeostasis in Mycobacterium and regulate specific stress response pathways during periods of extracytoplasmic stress. In vitro, exhibits proteolytic activity against the artificial substrate beta-casein. The protein is Serine protease PepD of Mycobacterium tuberculosis (strain ATCC 25618 / H37Rv).